The primary structure comprises 120 residues: UPF0231 protein KPK_4613 (120 aa).

The protein belongs to the UPF0231 family.

The polypeptide is UPF0231 protein KPK_4613 (Klebsiella pneumoniae (strain 342)).